The primary structure comprises 344 residues: Glutamine synthetase (344 aa).

The GS beta-grasp domain maps to 4–86 (YKLEYIWLDG…VMCEVMMPDG (83 aa)). The GS catalytic domain maps to 89-344 (PHASNKRATI…SVPTEKKAVA (256 aa)). Mg(2+) is bound by residues E109 and E111. E167 contributes to the ATP binding site. Mg(2+) is bound by residues E172 and E179. E278 is a binding site for L-glutamate.

The protein belongs to the glutamine synthetase family. Homooctamer and homotetramer. Mg(2+) is required as a cofactor.

It is found in the cytoplasm. It carries out the reaction L-glutamate + NH4(+) + ATP = L-glutamine + ADP + phosphate + H(+). Catalyzes the ATP-dependent biosynthesis of glutamine from glutamate and ammonia. In Bradyrhizobium diazoefficiens (strain JCM 10833 / BCRC 13528 / IAM 13628 / NBRC 14792 / USDA 110), this protein is Glutamine synthetase.